Consider the following 172-residue polypeptide: NADH-ubiquinone oxidoreductase chain 6 (172 aa).

The next 6 membrane-spanning stretches (helical) occupy residues 1–21 (MLSLVLCFFVMFLLGVAVVVL), 25–45 (PYFSALGLVFVAVSGCFIVLY), 48–68 (GTFLSLVLVLLYLGGMMVVFV), 86–106 (VIWFFVICVLCICFAGYMSFN), 108–128 (FFLDVSVACEGADYTGGIFGA), and 141–161 (LILVLAGWALLVCLFSVLVVV).

It belongs to the complex I subunit 6 family.

The protein resides in the mitochondrion membrane. It carries out the reaction a ubiquinone + NADH + 5 H(+)(in) = a ubiquinol + NAD(+) + 4 H(+)(out). In terms of biological role, core subunit of the mitochondrial membrane respiratory chain NADH dehydrogenase (Complex I) that is believed to belong to the minimal assembly required for catalysis. Complex I functions in the transfer of electrons from NADH to the respiratory chain. The immediate electron acceptor for the enzyme is believed to be ubiquinone. The chain is NADH-ubiquinone oxidoreductase chain 6 (MT-ND6) from Petromyzon marinus (Sea lamprey).